The sequence spans 448 residues: RING finger protein 44 (448 aa).

The RING-type; atypical zinc finger occupies 396 to 437; that stretch reads CVVCFSDFESRQLLRVLPCNHEFHAKCVDKWLKTNRTCPICR.

This Danio rerio (Zebrafish) protein is RING finger protein 44 (rnf44).